The primary structure comprises 244 residues: MATNPMNQFEVYRIGPEIKLGAIDISFTNASLFMVISSLAILLIFNLGSKKNSLLPSKMQLLSELSYTFVSKMISDTAGSKAKPYFAFIFSIFMFVLFCNMFGMIPYAFTVTSHIIVTFILASFIFVGVTIIGFMKHGLGYLKLFVPSGVPAVLLPLIVVIEIISYLSRPVSLSVRLFANMMAGHTMMKVFGGFVISLGIVGGWLPLSFSVALTGLEILVAFLQAYVFAILTCIYLNDALNLHH.

Transmembrane regions (helical) follow at residues 25–45 (ISFT…LLIF), 85–105 (YFAF…FGMI), 115–135 (IIVT…IGFM), 144–164 (LFVP…IEII), 193–213 (GFVI…SVAL), and 216–236 (LEIL…CIYL).

Belongs to the ATPase A chain family. As to quaternary structure, F-type ATPases have 2 components, CF(1) - the catalytic core - and CF(0) - the membrane proton channel. CF(1) has five subunits: alpha(3), beta(3), gamma(1), delta(1), epsilon(1). CF(0) has three main subunits: a(1), b(2) and c(9-12). The alpha and beta chains form an alternating ring which encloses part of the gamma chain. CF(1) is attached to CF(0) by a central stalk formed by the gamma and epsilon chains, while a peripheral stalk is formed by the delta and b chains.

The protein resides in the cell inner membrane. Functionally, key component of the proton channel; it plays a direct role in the translocation of protons across the membrane. The protein is ATP synthase subunit a of Pelagibacter ubique (strain HTCC1062).